A 397-amino-acid chain; its full sequence is Stearoyl-[acyl-carrier-protein] 9-desaturase, chloroplastic (397 aa).

The N-terminal 33 residues, 1–33, are a transit peptide targeting the chloroplast; it reads MALNFNAIASKSQKLPCFALPPKATLRSPKFSM. Fe cation contacts are provided by glutamate 138, glutamate 176, histidine 179, glutamate 229, glutamate 262, and histidine 265.

The protein belongs to the fatty acid desaturase type 2 family. As to quaternary structure, homodimer. Fe(2+) serves as cofactor.

It is found in the plastid. It localises to the chloroplast. The catalysed reaction is octadecanoyl-[ACP] + 2 reduced [2Fe-2S]-[ferredoxin] + O2 + 2 H(+) = (9Z)-octadecenoyl-[ACP] + 2 oxidized [2Fe-2S]-[ferredoxin] + 2 H2O. The protein operates within lipid metabolism; fatty acid metabolism. Converts stearoyl-ACP to oleoyl-ACP by introduction of a cis double bond between carbons 9 and 10 of the acyl chain. This chain is Stearoyl-[acyl-carrier-protein] 9-desaturase, chloroplastic, found in Gossypium hirsutum (Upland cotton).